The primary structure comprises 378 residues: Flap endonuclease 1 (378 aa).

The tract at residues 1–102 is N-domain; it reads MGIHGLAKLI…GELAKRSERR (102 aa). Residue arginine 19 is modified to Symmetric dimethylarginine; by PRMT5. A Mg(2+)-binding site is contributed by aspartate 34. DNA is bound by residues arginine 47 and arginine 69. Lysine 78 carries the post-translational modification N6-acetyllysine. Aspartate 84 serves as a coordination point for Mg(2+). 2 positions are modified to symmetric dimethylarginine; by PRMT5: arginine 98 and arginine 102. The I-domain stretch occupies residues 120–251; that stretch reads EVEKFTKRLV…KRAVDLIQKH (132 aa). Residues glutamate 156, glutamate 158, aspartate 177, and aspartate 179 each contribute to the Mg(2+) site. Position 156 (glutamate 156) interacts with DNA. Serine 185 carries the post-translational modification Phosphoserine; by CDK2. At arginine 190 the chain carries Symmetric dimethylarginine; by PRMT5. Serine 195 is subject to Phosphoserine. Residues glycine 229 and aspartate 231 each contribute to the DNA site. Mg(2+) is bound at residue aspartate 231. Phosphoserine is present on residues serine 253, serine 291, and serine 333. The interval 325–378 is disordered; sequence RLSKSRQGSTQGRLDDFFKVTGSLSSAKRKEPEPKGPAKKKAKTGGAGKFRRGK. Threonine 334 carries the post-translational modification Phosphothreonine. Positions 334 to 342 are interaction with PCNA; it reads TQGRLDDFF. Lysine 352, lysine 373, and lysine 378 each carry N6-acetyllysine. A compositionally biased stretch (basic residues) spans 361–378; sequence PAKKKAKTGGAGKFRRGK.

It belongs to the XPG/RAD2 endonuclease family. FEN1 subfamily. As to quaternary structure, interacts with PCNA. Three molecules of FEN1 bind to one PCNA trimer with each molecule binding to one PCNA monomer. PCNA stimulates the nuclease activity without altering cleavage specificity. The C-terminal domain binds EP300; can bind simultaneously to both PCNA and EP300. Interacts with DDX11; this interaction is direct and increases flap endonuclease activity of FEN1. Interacts with WDR4; regulating its endonuclease activity. Interacts with POLB. Mg(2+) is required as a cofactor. In terms of processing, acetylated by EP300. Acetylation inhibits both endonuclease and exonuclease activity. Acetylation also reduces DNA-binding activity but does not affect interaction with PCNA or EP300. Post-translationally, phosphorylation upon DNA damage induces relocalization to the nuclear plasma. Phosphorylation at Ser-185 by CDK2 occurs during late S-phase and results in dissociation from PCNA. Methylation at Arg-190 by PRMT5 impedes Ser-185 phosphorylation and increases interaction with PCNA.

The protein localises to the nucleus. It is found in the nucleolus. It localises to the nucleoplasm. The protein resides in the mitochondrion. Structure-specific nuclease with 5'-flap endonuclease and 5'-3' exonuclease activities involved in DNA replication and repair. During DNA replication, cleaves the 5'-overhanging flap structure that is generated by displacement synthesis when DNA polymerase encounters the 5'-end of a downstream Okazaki fragment. It enters the flap from the 5'-end and then tracks to cleave the flap base, leaving a nick for ligation. Also involved in the long patch base excision repair (LP-BER) pathway, by cleaving within the apurinic/apyrimidinic (AP) site-terminated flap. Acts as a genome stabilization factor that prevents flaps from equilibrating into structures that lead to duplications and deletions. Also possesses 5'-3' exonuclease activity on nicked or gapped double-stranded DNA, and exhibits RNase H activity. Also involved in replication and repair of rDNA and in repairing mitochondrial DNA. This is Flap endonuclease 1 from Mus musculus (Mouse).